The chain runs to 56 residues: MAVQQNKKSRSRRDMRRSHDALTTAAISVDKASGEKHLRHHVTADGYYRGRKVINK.

The interval 1-37 (MAVQQNKKSRSRRDMRRSHDALTTAAISVDKASGEKH) is disordered. The span at 7-16 (KKSRSRRDMR) shows a compositional bias: basic residues.

Belongs to the bacterial ribosomal protein bL32 family.

In Pasteurella multocida (strain Pm70), this protein is Large ribosomal subunit protein bL32 (rpmF).